A 96-amino-acid polypeptide reads, in one-letter code: uncharacterized protein (96 aa).

This is an uncharacterized protein from Methanocaldococcus jannaschii (strain ATCC 43067 / DSM 2661 / JAL-1 / JCM 10045 / NBRC 100440) (Methanococcus jannaschii).